A 308-amino-acid chain; its full sequence is Acetylglutamate kinase (308 aa).

Substrate is bound by residues 64-65 (GG), R86, and N192.

It belongs to the acetylglutamate kinase family. ArgB subfamily.

Its subcellular location is the cytoplasm. The catalysed reaction is N-acetyl-L-glutamate + ATP = N-acetyl-L-glutamyl 5-phosphate + ADP. Its pathway is amino-acid biosynthesis; L-arginine biosynthesis; N(2)-acetyl-L-ornithine from L-glutamate: step 2/4. In terms of biological role, catalyzes the ATP-dependent phosphorylation of N-acetyl-L-glutamate. In Myxococcus xanthus (strain DK1622), this protein is Acetylglutamate kinase.